A 343-amino-acid polypeptide reads, in one-letter code: Putative MO25-like protein At4g17270 (343 aa).

Belongs to the Mo25 family.

This Arabidopsis thaliana (Mouse-ear cress) protein is Putative MO25-like protein At4g17270.